Consider the following 528-residue polypeptide: Chaperonin GroEL, chloroplastic (528 aa).

ATP is bound by residues T29–P32, D86–T90, G414, D480–A482, and D496.

It belongs to the chaperonin (HSP60) family. Forms a cylinder of 14 subunits composed of two heptameric rings stacked back-to-back. Interacts with the co-chaperonin GroES.

The protein resides in the plastid. It is found in the chloroplast. The enzyme catalyses ATP + H2O + a folded polypeptide = ADP + phosphate + an unfolded polypeptide.. In terms of biological role, together with its co-chaperonin GroES, plays an essential role in assisting protein folding. The GroEL-GroES system forms a nano-cage that allows encapsulation of the non-native substrate proteins and provides a physical environment optimized to promote and accelerate protein folding. The protein is Chaperonin GroEL, chloroplastic of Pyropia yezoensis (Susabi-nori).